Consider the following 328-residue polypeptide: Glucokinase (328 aa).

16–21 (ADIGGT) serves as a coordination point for ATP.

Belongs to the bacterial glucokinase family.

The protein resides in the cytoplasm. The enzyme catalyses D-glucose + ATP = D-glucose 6-phosphate + ADP + H(+). In Neisseria gonorrhoeae (strain ATCC 700825 / FA 1090), this protein is Glucokinase.